A 301-amino-acid chain; its full sequence is Cytosolic sulfotransferase 3 (301 aa).

3'-phosphoadenylyl sulfate is bound at residue 53–58 (KAGTTW). Residue histidine 115 is the Proton acceptor of the active site. 3'-phosphoadenylyl sulfate-binding positions include arginine 137, serine 145, tyrosine 201, 235–240 (VQFDAM), and 263–265 (RKG).

It belongs to the sulfotransferase 1 family.

The protein localises to the cytoplasm. With respect to regulation, inhibited by Hg(2+), Co(2+), Zn(2+), Cd(2+), Cu(2+) and Pb(2+) ions. Activated slightly by Mn(2+), Ca(2+) and Mg(2+) ions. Sulfotransferase that utilizes 3'-phospho-5'-adenylyl sulfate (PAPS) as sulfonate donor to catalyze the sulfate conjugation of a variety of xenobiotic and endogenous compounds, including dopamine, T3 (triiodo-L-thyronine), T4 (thyroxine), estrone, DHEA (dehydroepiandrosterone), flavonoids, isoflavonoids and other phenolic compounds. The protein is Cytosolic sulfotransferase 3 of Danio rerio (Zebrafish).